A 580-amino-acid chain; its full sequence is Glypican-3 (580 aa).

The signal sequence occupies residues 1–24 (MAGTVRTACLVVAMLLSLDFPGQA). Gln25 is subject to Pyrrolidone carboxylic acid. Disulfide bonds link Cys35/Cys72, Cys65/Cys262, Cys73/Cys265, Cys197/Cys349, Cys252/Cys285, Cys274/Cys422, and Cys278/Cys410. N-linked (GlcNAc...) asparagine glycans are attached at residues Asn124 and Asn241. Ser352 is modified (phosphoserine; by FAM20C). N-linked (GlcNAc...) asparagine glycosylation is present at Asn418. O-linked (Xyl...) (glycosaminoglycan) serine glycosylation is found at Ser495 and Ser509. A lipid anchor (GPI-anchor amidated asparagine) is attached at Asn554. Positions 555 to 580 (LGNVHSPLKLLTSMAISVVCFFFLVH) are cleaved as a propeptide — removed in mature form.

Belongs to the glypican family. As to quaternary structure, heterodimer; disulfide-linked. Cleavage by a furin-like convertase results in production of alpha and beta chains which form a disulfide-linked heterodimer. Interacts with DPP4. Interacts with FGF2. Interacts with WNT5A. Also interacts with WNT3A and WNT7B. Interacts with hedgehog protein SHH; the heparan sulfate chains are not required for the interaction. Also interacts with hedgehog protein IHH. Interacts with CD81. Interacts with Wnt receptors FZD4, FZD7 and FZD8; the heparan sulfate chains are required for the interaction. O-glycosylated; contains heparan sulfate and/or chondroitin sulfate. In terms of processing, cleaved intracellularly by a furin-like convertase to generate 2 subunits, alpha and beta, which remain associated through disulfide bonds and are associated with the cell surface via the GPI-anchor. This processing is essential for its role in inhibition of hedgehog signaling. A second proteolytic event may result in cleavage of the protein on the cell surface, separating it from the GPI-anchor and leading to its shedding from the cell surface. In terms of tissue distribution, detected in placenta (at protein level). Highly expressed in lung, liver and kidney.

Its subcellular location is the cell membrane. In terms of biological role, cell surface proteoglycan. Negatively regulates the hedgehog signaling pathway when attached via the GPI-anchor to the cell surface by competing with the hedgehog receptor PTC1 for binding to hedgehog proteins. Binding to the hedgehog protein SHH triggers internalization of the complex by endocytosis and its subsequent lysosomal degradation. Positively regulates the canonical Wnt signaling pathway by binding to the Wnt receptor Frizzled and stimulating the binding of the Frizzled receptor to Wnt ligands. Positively regulates the non-canonical Wnt signaling pathway. Binds to CD81 which decreases the availability of free CD81 for binding to the transcriptional repressor HHEX, resulting in nuclear translocation of HHEX and transcriptional repression. Inhibits the dipeptidyl peptidase activity of DPP4. Plays a role in limb patterning and skeletal development by controlling the cellular response to BMP4. Modulates the effects of growth factors BMP2, BMP7 and FGF7 on renal branching morphogenesis. Required for coronary vascular development. Plays a role in regulating cell movements during gastrulation. This Homo sapiens (Human) protein is Glypican-3 (GPC3).